A 358-amino-acid polypeptide reads, in one-letter code: Heme A synthase (358 aa).

8 helical membrane-spanning segments follow: residues 25–45 (LVRY…MVGG), 111–131 (LLAR…WLTG), 141–161 (MLGL…MVAS), 176–196 (IHLT…RGLV), 210–230 (FAGW…LVAG), 269–289 (VQFV…LHAV), 304–324 (TIVL…TLLM), and 326–346 (APLH…AFAV). H273 is a heme binding site. Residue H334 coordinates heme.

It belongs to the COX15/CtaA family. Type 2 subfamily. Interacts with CtaB. The cofactor is heme b.

It is found in the cell membrane. The enzyme catalyses Fe(II)-heme o + 2 A + H2O = Fe(II)-heme a + 2 AH2. It functions in the pathway porphyrin-containing compound metabolism; heme A biosynthesis; heme A from heme O: step 1/1. Its function is as follows. Catalyzes the conversion of heme O to heme A by two successive hydroxylations of the methyl group at C8. The first hydroxylation forms heme I, the second hydroxylation results in an unstable dihydroxymethyl group, which spontaneously dehydrates, resulting in the formyl group of heme A. In Brucella suis (strain ATCC 23445 / NCTC 10510), this protein is Heme A synthase.